The sequence spans 111 residues: Ig kappa chain V-III region PC 6684 (111 aa).

Residues 1–23 (DIVLTQSPASLAVSLGQRATISC) form a framework-1 region. Cys23 and Cys92 are joined by a disulfide. Residues 24–38 (RASKSVSTSGYSYMH) are complementarity-determining-1. The interval 39–53 (WYQQKPGQPPKLLIY) is framework-2. Positions 54-60 (LASNLES) are complementarity-determining-2. The interval 61–92 (GVPARFSGSGSGTDFTLNIHPVEEEDAATYYC) is framework-3. The tract at residues 93-101 (QHSRELPRT) is complementarity-determining-3. Residues 102–111 (FGGGTKLEIK) are framework-4.

This Mus musculus (Mouse) protein is Ig kappa chain V-III region PC 6684.